The following is a 140-amino-acid chain: Profilin (140 aa).

Residue Ser2 is modified to N-acetylserine.

It belongs to the profilin family. Occurs in many kinds of cells as a complex with monomeric actin in a 1:1 ratio.

Its subcellular location is the cytoplasm. The protein resides in the cytoskeleton. Functionally, binds to actin and affects the structure of the cytoskeleton. At high concentrations, profilin prevents the polymerization of actin, whereas it enhances it at low concentrations. By binding to PIP2, it inhibits the formation of IP3 and DG. This is Profilin from Heliocidaris crassispina (Sea urchin).